We begin with the raw amino-acid sequence, 524 residues long: Rho guanine nucleotide exchange factor 3 (524 aa).

The interval 75 to 98 is disordered; it reads SDSRPDLFSPRPWSRNTPAANTKR. The DH domain occupies 121 to 303; the sequence is IKRQEAIFEL…IQGIVAEINI (183 aa). One can recognise a PH domain in the interval 290–448; that stretch reads AINIIQGIVA…QWLNCIRQAK (159 aa).

The protein resides in the cytoplasm. Its function is as follows. Acts as a guanine nucleotide exchange factor (GEF) for RhoA and RhoB GTPases. This chain is Rho guanine nucleotide exchange factor 3 (Arhgef3), found in Gallus gallus (Chicken).